We begin with the raw amino-acid sequence, 216 residues long: Cytochrome c oxidase subunit 2 (216 aa).

At 1 to 8 the chain is on the mitochondrial intermembrane side; it reads LGLQNATS. Residues 9 to 39 form a helical membrane-spanning segment; the sequence is PIMEELIAFHDHALMIIFLISSLVLYIISLM. Over 40–53 the chain is Mitochondrial matrix; it reads LTTKLTHTSTMNAQ. A helical membrane pass occupies residues 54 to 81; that stretch reads EIEMIWTILPAVILIMIALPSLRILYMT. Topologically, residues 82-216 are mitochondrial intermembrane; it reads DEFNKPYLTL…FIYFQDFEVW (135 aa). Cu cation is bound by residues H155, C190, E192, C194, H198, and M201. Residue E192 coordinates Mg(2+).

This sequence belongs to the cytochrome c oxidase subunit 2 family. In terms of assembly, component of the cytochrome c oxidase (complex IV, CIV), a multisubunit enzyme composed of 14 subunits. The complex is composed of a catalytic core of 3 subunits MT-CO1, MT-CO2 and MT-CO3, encoded in the mitochondrial DNA, and 11 supernumerary subunits COX4I, COX5A, COX5B, COX6A, COX6B, COX6C, COX7A, COX7B, COX7C, COX8 and NDUFA4, which are encoded in the nuclear genome. The complex exists as a monomer or a dimer and forms supercomplexes (SCs) in the inner mitochondrial membrane with NADH-ubiquinone oxidoreductase (complex I, CI) and ubiquinol-cytochrome c oxidoreductase (cytochrome b-c1 complex, complex III, CIII), resulting in different assemblies (supercomplex SCI(1)III(2)IV(1) and megacomplex MCI(2)III(2)IV(2)). Found in a complex with TMEM177, COA6, COX18, COX20, SCO1 and SCO2. Interacts with TMEM177 in a COX20-dependent manner. Interacts with COX20. Interacts with COX16. Cu cation serves as cofactor.

Its subcellular location is the mitochondrion inner membrane. The enzyme catalyses 4 Fe(II)-[cytochrome c] + O2 + 8 H(+)(in) = 4 Fe(III)-[cytochrome c] + 2 H2O + 4 H(+)(out). Its function is as follows. Component of the cytochrome c oxidase, the last enzyme in the mitochondrial electron transport chain which drives oxidative phosphorylation. The respiratory chain contains 3 multisubunit complexes succinate dehydrogenase (complex II, CII), ubiquinol-cytochrome c oxidoreductase (cytochrome b-c1 complex, complex III, CIII) and cytochrome c oxidase (complex IV, CIV), that cooperate to transfer electrons derived from NADH and succinate to molecular oxygen, creating an electrochemical gradient over the inner membrane that drives transmembrane transport and the ATP synthase. Cytochrome c oxidase is the component of the respiratory chain that catalyzes the reduction of oxygen to water. Electrons originating from reduced cytochrome c in the intermembrane space (IMS) are transferred via the dinuclear copper A center (CU(A)) of subunit 2 and heme A of subunit 1 to the active site in subunit 1, a binuclear center (BNC) formed by heme A3 and copper B (CU(B)). The BNC reduces molecular oxygen to 2 water molecules using 4 electrons from cytochrome c in the IMS and 4 protons from the mitochondrial matrix. The protein is Cytochrome c oxidase subunit 2 (MT-CO2) of Callimico goeldii (Goeldi's marmoset).